The chain runs to 359 residues: tRNA N6-adenosine threonylcarbamoyltransferase (359 aa).

2 residues coordinate Fe cation: histidine 121 and histidine 125. Residues 143 to 147, aspartate 176, glycine 189, and asparagine 286 contribute to the substrate site; that span reads LVSGG. Aspartate 311 provides a ligand contact to Fe cation.

The protein belongs to the KAE1 / TsaD family. Fe(2+) is required as a cofactor.

It is found in the cytoplasm. It catalyses the reaction L-threonylcarbamoyladenylate + adenosine(37) in tRNA = N(6)-L-threonylcarbamoyladenosine(37) in tRNA + AMP + H(+). Its function is as follows. Required for the formation of a threonylcarbamoyl group on adenosine at position 37 (t(6)A37) in tRNAs that read codons beginning with adenine. Is involved in the transfer of the threonylcarbamoyl moiety of threonylcarbamoyl-AMP (TC-AMP) to the N6 group of A37, together with TsaE and TsaB. TsaD likely plays a direct catalytic role in this reaction. This chain is tRNA N6-adenosine threonylcarbamoyltransferase, found in Jannaschia sp. (strain CCS1).